We begin with the raw amino-acid sequence, 236 residues long: ATP synthase subunit a (236 aa).

Transmembrane regions (helical) follow at residues 17-37, 75-95, 112-132, 174-194, and 208-228; these read LSDM…AVAA, FLTL…LGLP, DATV…YYGV, IYAG…YGVL, and FSIF…MVYM.

The protein belongs to the ATPase A chain family. In terms of assembly, F-type ATPases have 2 components, CF(1) - the catalytic core - and CF(0) - the membrane proton channel. CF(1) has five subunits: alpha(3), beta(3), gamma(1), delta(1), epsilon(1). CF(0) has three main subunits: a(1), b(2) and c(9-12). The alpha and beta chains form an alternating ring which encloses part of the gamma chain. CF(1) is attached to CF(0) by a central stalk formed by the gamma and epsilon chains, while a peripheral stalk is formed by the delta and b chains.

It is found in the cell membrane. Key component of the proton channel; it plays a direct role in the translocation of protons across the membrane. This Geobacillus stearothermophilus (Bacillus stearothermophilus) protein is ATP synthase subunit a.